The primary structure comprises 873 residues: Envelope glycoprotein B (873 aa).

The first 21 residues, 1 to 21, serve as a signal peptide directing secretion; that stretch reads MASLKMLICVCVAILIPSTLS. The Virion surface portion of the chain corresponds to 22-740; that stretch reads QDSHGIAGII…SGIASFLSNP (719 aa). Cystine bridges form between cysteine 67-cysteine 525, cysteine 84-cysteine 481, cysteine 157-cysteine 219, cysteine 311-cysteine 359, and cysteine 548-cysteine 598. N-linked (GlcNAc...) asparagine; by host glycans are attached at residues asparagine 92 and asparagine 111. The tract at residues 124-130 is involved in fusion and/or binding to host membrane; the sequence is TWALFSR. Asparagine 201 carries N-linked (GlcNAc...) asparagine; by host glycosylation. An involved in fusion and/or binding to host membrane region spans residues 206 to 213; sequence HQTLGYRT. 2 N-linked (GlcNAc...) asparagine; by host glycosylation sites follow: asparagine 252 and asparagine 350. Residues 418–447 form a disordered region; it reads QNHLPRGRERRQAAGRRTASLQSGPQGDRI. 3 N-linked (GlcNAc...) asparagine; by host glycosylation sites follow: asparagine 569, asparagine 625, and asparagine 639. 2 hydrophobic membrane proximal region regions span residues 684–738 and 715–734; these read IDTV…SFLS and LGTV…SGIA. Residues 741–761 traverse the membrane as a helical segment; that stretch reads FAALGIGIAVVVSIILGLLAF. At 762–873 the chain is on the intravirion side; it reads KYVMNLKSNP…PSWAEESEDE (112 aa). The disordered stretch occupies residues 781–807; sequence PPAGTPPRPSRRYYKDEEEVEEDSDED. Residues 796–807 show a composition bias toward acidic residues; that stretch reads DEEEVEEDSDED. Residues 858-861 carry the Internalization motif motif; the sequence is YPLL.

The protein belongs to the herpesviridae glycoprotein B family. Homotrimer; disulfide-linked. Binds to heparan sulfate proteoglycans. Interacts with gH/gL heterodimer. A proteolytic cleavage by host furin generates two subunits that remain linked by disulfide bonds.

Its subcellular location is the virion membrane. It is found in the host cell membrane. The protein resides in the host endosome membrane. It localises to the host Golgi apparatus membrane. Functionally, envelope glycoprotein that forms spikes at the surface of virion envelope. Essential for the initial attachment to heparan sulfate moieties of the host cell surface proteoglycans. Involved in fusion of viral and cellular membranes leading to virus entry into the host cell. Following initial binding to its host receptors, membrane fusion is mediated by the fusion machinery composed at least of gB and the heterodimer gH/gL. May be involved in the fusion between the virion envelope and the outer nuclear membrane during virion egress. This is Envelope glycoprotein B from Infectious laryngotracheitis virus (strain 632) (ILTV).